The sequence spans 247 residues: Sugar fermentation stimulation protein homolog (247 aa).

The protein belongs to the SfsA family.

This Aeromonas hydrophila subsp. hydrophila (strain ATCC 7966 / DSM 30187 / BCRC 13018 / CCUG 14551 / JCM 1027 / KCTC 2358 / NCIMB 9240 / NCTC 8049) protein is Sugar fermentation stimulation protein homolog.